We begin with the raw amino-acid sequence, 170 residues long: MPQNQSDIRRVFLHTGDAYLGVKPTIVSTVLGSCVAISMFSPRKRQGIICHAFLPSRAEIKDVNEPSIQICRYVDTAVDHLLKSMRRLGVRKNELEVKLFGGATGLSYSQVRPSCALGIGNRNVDAALENLEAKGLKPVSMDVGGNVGRKLLFCTYSGDVWIKRLEKHMF.

The protein belongs to the CheD family.

It catalyses the reaction L-glutaminyl-[protein] + H2O = L-glutamyl-[protein] + NH4(+). Functionally, probably deamidates glutamine residues to glutamate on methyl-accepting chemotaxis receptors (MCPs), playing an important role in chemotaxis. This is Probable chemoreceptor glutamine deamidase CheD from Maridesulfovibrio salexigens (strain ATCC 14822 / DSM 2638 / NCIMB 8403 / VKM B-1763) (Desulfovibrio salexigens).